The chain runs to 263 residues: 3-methyl-2-oxobutanoate hydroxymethyltransferase (263 aa).

Mg(2+) is bound by residues D45 and D84. Residues 45-46 (DS), D84, and K112 each bind 3-methyl-2-oxobutanoate. Residue E114 participates in Mg(2+) binding. E181 functions as the Proton acceptor in the catalytic mechanism.

It belongs to the PanB family. In terms of assembly, homodecamer; pentamer of dimers. Mg(2+) is required as a cofactor.

It localises to the cytoplasm. The catalysed reaction is 3-methyl-2-oxobutanoate + (6R)-5,10-methylene-5,6,7,8-tetrahydrofolate + H2O = 2-dehydropantoate + (6S)-5,6,7,8-tetrahydrofolate. It participates in cofactor biosynthesis; (R)-pantothenate biosynthesis; (R)-pantoate from 3-methyl-2-oxobutanoate: step 1/2. Its function is as follows. Catalyzes the reversible reaction in which hydroxymethyl group from 5,10-methylenetetrahydrofolate is transferred onto alpha-ketoisovalerate to form ketopantoate. The chain is 3-methyl-2-oxobutanoate hydroxymethyltransferase from Buchnera aphidicola subsp. Schizaphis graminum (strain Sg).